A 212-amino-acid polypeptide reads, in one-letter code: Ribosomal RNA large subunit methyltransferase E (212 aa).

Residues 1 to 26 form a disordered region; sequence MPAERPSVSQKPKNPYKRPDAFTKAA. S-adenosyl-L-methionine-binding residues include Gly-63, Trp-65, Asp-83, Asp-101, and Asp-122. Lys-162 (proton acceptor) is an active-site residue.

This sequence belongs to the class I-like SAM-binding methyltransferase superfamily. RNA methyltransferase RlmE family.

Its subcellular location is the cytoplasm. The enzyme catalyses uridine(2552) in 23S rRNA + S-adenosyl-L-methionine = 2'-O-methyluridine(2552) in 23S rRNA + S-adenosyl-L-homocysteine + H(+). Specifically methylates the uridine in position 2552 of 23S rRNA at the 2'-O position of the ribose in the fully assembled 50S ribosomal subunit. This is Ribosomal RNA large subunit methyltransferase E from Sorangium cellulosum (strain So ce56) (Polyangium cellulosum (strain So ce56)).